Here is a 435-residue protein sequence, read N- to C-terminus: Serine carboxypeptidase-like 12 (435 aa).

The signal sequence occupies residues 1–21 (MKSTPKLLLLLLFIINHHVDS). Disulfide bonds link C80–C323, C244–C258, and C282–C289. N-linked (GlcNAc...) asparagine glycosylation occurs at N101. The active site involves S176. N-linked (GlcNAc...) asparagine glycosylation is found at N313, N336, and N344. D360 is an active-site residue. N376 carries an N-linked (GlcNAc...) asparagine glycan. Residue H413 is part of the active site. An N-linked (GlcNAc...) asparagine glycan is attached at N420.

Belongs to the peptidase S10 family. In terms of tissue distribution, expressed in roots.

Its subcellular location is the secreted. Its function is as follows. Probable carboxypeptidase. This Arabidopsis thaliana (Mouse-ear cress) protein is Serine carboxypeptidase-like 12 (SCPL12).